We begin with the raw amino-acid sequence, 496 residues long: Zinc finger protein PLAGL2 (496 aa).

6 C2H2-type zinc fingers span residues 68-92 (YSCP…MATH), 98-120 (HQCM…LQTH), 127-149 (LHCS…LAMH), 156-178 (LSCK…LKAH), 191-213 (HPCD…LVVH), and 219-242 (FLCQ…KKSH).

Belongs to the krueppel C2H2-type zinc-finger protein family.

Its subcellular location is the nucleus. In terms of biological role, shows weak transcriptional activatory activity. The chain is Zinc finger protein PLAGL2 (PLAGL2) from Homo sapiens (Human).